The primary structure comprises 147 residues: Hemoglobin subunit gamma (147 aa).

Residues 3–147 (HFTAEEKAII…VATALAHKYH (145 aa)) form the Globin domain. Residues H64 and H93 each coordinate heme b.

The protein belongs to the globin family. Heterotetramer of two alpha chains and two gamma chains in fetal hemoglobin (Hb F). As to expression, red blood cells.

Functionally, gamma chains make up the fetal hemoglobin F, in combination with alpha chains. The chain is Hemoglobin subunit gamma (HBG) from Otolemur crassicaudatus (Brown greater galago).